Here is a 469-residue protein sequence, read N- to C-terminus: MFKNPAELADRVLAGTPVTPDEALDLLRTDDPGMLDLVAAAARLRREHFGMTVKVNYLVNLKSGLCAEDCGYCSQRLNAGTDILKYSWLSPEQAVEQAEYGIKGGASRVCLVASGRGPSNREVGNVTRTVEALKEQHPDVEVCACLGLLKDGQAESLSSAGVNAYNHNLNTAESHYESICSTHTYQDRVDTVERAKDAGLSPCSGLIVGMRETDEQLVEAVFALRDLGSDSVPVNFLMPFEGTPLAGTWQLSPQKCLKILAVVRFVCPDKEIRMAGGREMHLRSLQPLALHVVNSLFLGDYLTSEGQAAEADLAMIADAGFTVLGAGPDPSRDRHAGPADVQGSGAEQGAGERTTTPCGSVCGSAAGSSSGDGSAPDGGRAPADVSRSGPAEAVGSSPEDGSRNAGGPARTRSAAASSAPTGAGMSPALAALLGSDDGPEQDEDDTRVRVELSPTVRRRGAGTSVAPNA.

The region spanning 51–278 (MTVKVNYLVN…DKEIRMAGGR (228 aa)) is the Radical SAM core domain. [4Fe-4S] cluster contacts are provided by C66, C70, and C73. Positions 110, 143, 203, and 273 each coordinate [2Fe-2S] cluster. The disordered stretch occupies residues 326 to 469 (AGPDPSRDRH…GAGTSVAPNA (144 aa)). Composition is skewed to low complexity over residues 363-384 (GSAAGSSSGDGSAPDGGRAPAD) and 405-428 (AGGPARTRSAAASSAPTGAGMSPA).

The protein belongs to the radical SAM superfamily. Biotin synthase family. Homodimer. [4Fe-4S] cluster is required as a cofactor. [2Fe-2S] cluster serves as cofactor.

It carries out the reaction (4R,5S)-dethiobiotin + (sulfur carrier)-SH + 2 reduced [2Fe-2S]-[ferredoxin] + 2 S-adenosyl-L-methionine = (sulfur carrier)-H + biotin + 2 5'-deoxyadenosine + 2 L-methionine + 2 oxidized [2Fe-2S]-[ferredoxin]. It functions in the pathway cofactor biosynthesis; biotin biosynthesis; biotin from 7,8-diaminononanoate: step 2/2. In terms of biological role, catalyzes the conversion of dethiobiotin (DTB) to biotin by the insertion of a sulfur atom into dethiobiotin via a radical-based mechanism. In Kocuria rhizophila (strain ATCC 9341 / DSM 348 / NBRC 103217 / DC2201), this protein is Biotin synthase.